We begin with the raw amino-acid sequence, 162 residues long: Peptidyl-prolyl cis-trans isomerase (162 aa).

The region spanning 16–162 (KTAYATIKTN…IESVVFSPSL (147 aa)) is the PPIase cyclophilin-type domain.

This sequence belongs to the cyclophilin-type PPIase family.

It carries out the reaction [protein]-peptidylproline (omega=180) = [protein]-peptidylproline (omega=0). Its function is as follows. PPIases accelerate the folding of proteins. It catalyzes the cis-trans isomerization of proline imidic peptide bonds in oligopeptides. The protein is Peptidyl-prolyl cis-trans isomerase (ppiA) of Helicobacter pylori (strain J99 / ATCC 700824) (Campylobacter pylori J99).